Reading from the N-terminus, the 689-residue chain is Sodium-dependent phosphate transport protein 2B (689 aa).

Residues 1–41 (MAPWPELGDAQPNPDKYLEGAAGQQPTAPDKSKETNKNNTE) are disordered. The Cytoplasmic portion of the chain corresponds to 1–100 (MAPWPELGDA…LCVFQGIGRL (100 aa)). A helical membrane pass occupies residues 101–121 (ILLLGFLYFFVCSLDILSSAF). Topologically, residues 122–135 (QLVGGKMAGQFFSN) are extracellular. The helical transmembrane segment at 136-156 (SSIMSNPLLGLVIGVLVTVLV) threads the bilayer. At 157-212 (QSSSTSTSIVVSMVSSSLLTVRAAIPIIMGANIGTSITNTIVALMQVGDRSEFRRA) the chain is on the cytoplasmic side. Residues 213–233 (FAGATVHDFFNWLSVLVLLPV) form a helical membrane-spanning segment. The Extracellular portion of the chain corresponds to 234-362 (EVATHYLEII…FVNFHLPDLA (129 aa)). N294, N307, and N320 each carry an N-linked (GlcNAc...) asparagine glycan. C302 and C349 form a disulfide bridge. The helical transmembrane segment at 363 to 383 (VGTILLILSLLVLCGCLIMIV) threads the bilayer. Over 384 to 407 (KILGSVLKGQVATVIKKTINTDFP) the chain is Cytoplasmic. Residues 408–428 (FPFAWLTGYLAILVGAGMTFI) form a helical membrane-spanning segment. The Extracellular portion of the chain corresponds to 429–485 (VQSSSVFTSALTPLIGIGVITIERAYPLTLGSNIGTTTTAILAALASPGNALRSSLQ). The chain crosses the membrane as a helical span at residues 486–506 (IALCHFFFNISGILLWYPIPF). Over 507–525 (TRLPIRMAKGLGNISAKYR) the chain is Cytoplasmic. The chain crosses the membrane as a helical span at residues 526 to 546 (WFAVFYLIIFFFLIPLTVFGL). Residues 547 to 552 (SLAGWR) are Extracellular-facing. Residues 553 to 573 (VLVGVGVPVVFIIILVLCLRL) traverse the membrane as a helical segment. The Cytoplasmic portion of the chain corresponds to 574 to 687 (LQSRCPRVLP…PASDSKTECT (114 aa)).

The protein belongs to the SLC34A transporter family.

The protein localises to the apical cell membrane. The enzyme catalyses 3 Na(+)(out) + phosphate(out) = 3 Na(+)(in) + phosphate(in). In terms of biological role, involved in actively transporting phosphate into cells via Na(+) cotransport. The chain is Sodium-dependent phosphate transport protein 2B (SLC34A2) from Pongo abelii (Sumatran orangutan).